Here is a 143-residue protein sequence, read N- to C-terminus: Small ribosomal subunit protein bS18 (143 aa).

Residues 1-72 (MARPDMGGPK…RGGEEGGRRG (72 aa)) are disordered. Gly residues predominate over residues 10–50 (KSSGGFGGPRSGGGFGGGGYGGGGGGGGGYGGGGGGGFGGR). Basic and acidic residues predominate over residues 51-70 (GGDRGDRGDRDDRGGEEGGR).

The protein belongs to the bacterial ribosomal protein bS18 family. As to quaternary structure, part of the 30S ribosomal subunit. Forms a tight heterodimer with protein bS6.

In terms of biological role, binds as a heterodimer with protein bS6 to the central domain of the 16S rRNA, where it helps stabilize the platform of the 30S subunit. In Anaeromyxobacter sp. (strain Fw109-5), this protein is Small ribosomal subunit protein bS18.